The primary structure comprises 609 residues: DNA-directed RNA polymerase subunit beta' (609 aa).

Residues Cys67, Cys69, Cys82, and Cys85 each contribute to the Zn(2+) site. Mg(2+)-binding residues include Asp460, Asp462, and Asp464.

It belongs to the RNA polymerase beta' chain family. RpoC1 subfamily. In plastids the minimal PEP RNA polymerase catalytic core is composed of four subunits: alpha, beta, beta', and beta''. When a (nuclear-encoded) sigma factor is associated with the core the holoenzyme is formed, which can initiate transcription. It depends on Mg(2+) as a cofactor. Zn(2+) serves as cofactor.

It localises to the plastid. The protein localises to the chloroplast. The catalysed reaction is RNA(n) + a ribonucleoside 5'-triphosphate = RNA(n+1) + diphosphate. DNA-dependent RNA polymerase catalyzes the transcription of DNA into RNA using the four ribonucleoside triphosphates as substrates. In Emiliania huxleyi (Coccolithophore), this protein is DNA-directed RNA polymerase subunit beta'.